The primary structure comprises 138 residues: RuBisCO chaperone RbcX (138 aa).

The tract at residues 118–138 (VDNFPSETSNGESNNNDSPPS) is disordered. Residues 122–138 (PSETSNGESNNNDSPPS) are compositionally biased toward polar residues.

Belongs to the RbcX family. As to quaternary structure, homodimer. Interacts with the exposed C-terminal peptide of RbcL via its central cleft, contacts a second RbcL monomer via its peripheral polar surface.

It is found in the carboxysome. The protein localises to the cytoplasm. An RbcL-specific chaperone. The central cleft of the RbcX homodimer (RbcX2) binds the C-terminus of an RbcL monomer, stabilizing the C-terminus and probably preventing its reassociation with chaperonin GroEL-ES. At the same time the peripheral region of RbcX2 binds a second RbcL monomer, bridging the RbcL homodimers in the correct orientation. The RbcX2(2)-bound RbcL dimers then assemble into the RbcL8 core (RbcL8-(RbcX2)8). RbcS binding triggers the release of RbcX2. The protein is RuBisCO chaperone RbcX of Synechocystis sp. (strain ATCC 27184 / PCC 6803 / Kazusa).